Here is a 594-residue protein sequence, read N- to C-terminus: Proteasome-associated ATPase (594 aa).

Positions 1-12 (MTETSANKPENT) are enriched in polar residues. The segment at 1-20 (MTETSANKPENTQAHEGRDY) is disordered. A coiled-coil region spans residues 18–71 (RDYSVLERQFNVLRDKLRNVDRQLAAATQNNTKMTTTLQSAKAEILRLKSALEK). 282–287 (GCGKTL) is an ATP binding site. The interval 593-594 (YL) is docks into pockets in the proteasome alpha-ring.

This sequence belongs to the AAA ATPase family. In terms of assembly, homohexamer. Assembles into a hexameric ring structure that caps the 20S proteasome core. Strongly interacts with the prokaryotic ubiquitin-like protein Pup through a hydrophobic interface; the interacting region of ARC lies in its N-terminal coiled-coil domain. There is one Pup binding site per ARC hexamer ring. Upon ATP-binding, the C-terminus of ARC interacts with the alpha-rings of the proteasome core, possibly by binding to the intersubunit pockets.

The protein operates within protein degradation; proteasomal Pup-dependent pathway. In terms of biological role, ATPase which is responsible for recognizing, binding, unfolding and translocation of pupylated proteins into the bacterial 20S proteasome core particle. May be essential for opening the gate of the 20S proteasome via an interaction with its C-terminus, thereby allowing substrate entry and access to the site of proteolysis. Thus, the C-termini of the proteasomal ATPase may function like a 'key in a lock' to induce gate opening and therefore regulate proteolysis. The protein is Proteasome-associated ATPase of Renibacterium salmoninarum (strain ATCC 33209 / DSM 20767 / JCM 11484 / NBRC 15589 / NCIMB 2235).